Consider the following 85-residue polypeptide: Transcriptional repressor protein KorC (85 aa).

The H-T-H motif DNA-binding region spans glutamate 28 to glycine 47.

Its function is as follows. Acts with KorA as corepressor in the control of the kilC and kilE operons. This chain is Transcriptional repressor protein KorC (korC), found in Escherichia coli.